The sequence spans 364 residues: Spermidine/putrescine import ATP-binding protein PotA (364 aa).

An ABC transporter domain is found at 10 to 244 (IEVVNVSKIF…PAERFVADFI (235 aa)). Position 46–53 (46–53 (GPSGCGKT)) interacts with ATP.

Belongs to the ABC transporter superfamily. Spermidine/putrescine importer (TC 3.A.1.11.1) family. As to quaternary structure, the complex is composed of two ATP-binding proteins (PotA), two transmembrane proteins (PotB and PotC) and a solute-binding protein (PotD).

Its subcellular location is the cell inner membrane. The catalysed reaction is ATP + H2O + polyamine-[polyamine-binding protein]Side 1 = ADP + phosphate + polyamineSide 2 + [polyamine-binding protein]Side 1.. Functionally, part of the ABC transporter complex PotABCD involved in spermidine/putrescine import. Responsible for energy coupling to the transport system. This chain is Spermidine/putrescine import ATP-binding protein PotA, found in Mesorhizobium japonicum (strain LMG 29417 / CECT 9101 / MAFF 303099) (Mesorhizobium loti (strain MAFF 303099)).